A 264-amino-acid polypeptide reads, in one-letter code: 3-methyl-2-oxobutanoate hydroxymethyltransferase (264 aa).

Mg(2+)-binding residues include aspartate 45 and aspartate 84. 3-methyl-2-oxobutanoate is bound by residues 45–46 (DS), aspartate 84, and lysine 112. Residue glutamate 114 participates in Mg(2+) binding. The active-site Proton acceptor is the glutamate 181.

The protein belongs to the PanB family. In terms of assembly, homodecamer; pentamer of dimers. Mg(2+) serves as cofactor.

Its subcellular location is the cytoplasm. The catalysed reaction is 3-methyl-2-oxobutanoate + (6R)-5,10-methylene-5,6,7,8-tetrahydrofolate + H2O = 2-dehydropantoate + (6S)-5,6,7,8-tetrahydrofolate. Its pathway is cofactor biosynthesis; (R)-pantothenate biosynthesis; (R)-pantoate from 3-methyl-2-oxobutanoate: step 1/2. Catalyzes the reversible reaction in which hydroxymethyl group from 5,10-methylenetetrahydrofolate is transferred onto alpha-ketoisovalerate to form ketopantoate. The protein is 3-methyl-2-oxobutanoate hydroxymethyltransferase of Vibrio vulnificus (strain YJ016).